A 125-amino-acid chain; its full sequence is Small ribosomal subunit protein eS8 (125 aa).

Positions 1–23 (MQFQGRSRRKYTGAKLKSARGKR) are enriched in basic residues. The disordered stretch occupies residues 1–34 (MQFQGRSRRKYTGAKLKSARGKRKFELGREPAAT).

The protein belongs to the eukaryotic ribosomal protein eS8 family. In terms of assembly, part of the 30S ribosomal subunit.

This is Small ribosomal subunit protein eS8 from Methanococcoides burtonii (strain DSM 6242 / NBRC 107633 / OCM 468 / ACE-M).